Consider the following 965-residue polypeptide: Receptor-like protein 15 (965 aa).

An N-terminal signal peptide occupies residues 1-23 (MEGKVFLGHNLIWVMLLMGQLHG). Residues 24–916 (YKSCIDEEKI…GVEADESIID (893 aa)) are Extracellular-facing. Residues Asn57, Asn95, Asn109, and Asn145 are each glycosylated (N-linked (GlcNAc...) asparagine). 17 LRR repeats span residues 80–102 (EISF…LHPF), 103–127 (EDVR…GYKS), 131–154 (LRKL…FLSA), 156–179 (TSLT…ELRD), 180–204 (LTNL…ELSS), 206–230 (RKLK…KFCT), 243–267 (LNNM…LTSL), 268–290 (TGLR…SLGS), 292–315 (QSLE…SLAN), 316–341 (LSNL…SWKP), 342–365 (KFQL…LLHQ), 366–389 (KDLR…LLAN), 391–415 (TKLK…AHNL), 417–435 (FLDV…NIGW), 437–461 (FPHL…LGNM), 462–485 (NGIQ…FVNG), and 487–512 (YSMA…NFTN). Asn194 is a glycosylation site (N-linked (GlcNAc...) asparagine). Asn315 carries N-linked (GlcNAc...) asparagine glycosylation. N-linked (GlcNAc...) asparagine glycans are attached at residues Asn377 and Asn389. An N-linked (GlcNAc...) asparagine glycan is attached at Asn444. An N-linked (GlcNAc...) asparagine glycan is attached at Asn509. Residues 514–533 (LGLFMDNNLFTGKIGQGLRS) form an LRR 18; degenerate repeat. LRR repeat units lie at residues 534–557 (LINL…WIGE), 558–582 (LPSL…LFNK), 584–606 (SLQL…HDSR), 608–627 (GVVL…DTLL), 628–652 (ANVE…NIQN), 654–674 (SILL…LCGL), 675–698 (SNIQ…LSNT), 778–801 (LKLL…EFGG), 802–825 (LLEL…SISS), 827–850 (EKME…LTEL), and 851–875 (TSLS…QFNT). Asn546 and Asn581 each carry an N-linked (GlcNAc...) asparagine glycan. N-linked (GlcNAc...) asparagine glycosylation is found at Asn652, Asn662, Asn688, and Asn697. N-linked (GlcNAc...) asparagine glycans are attached at residues Asn809 and Asn814. N-linked (GlcNAc...) asparagine glycosylation is found at Asn862, Asn893, and Asn898. Residues 917–937 (MVSFYLSFAAAYVTILIGILA) form a helical membrane-spanning segment. Topologically, residues 938-965 (SLSFDSPWSRFWFYKVDAFIKKVRNLLL) are cytoplasmic.

Belongs to the RLP family.

It is found in the cell membrane. This chain is Receptor-like protein 15, found in Arabidopsis thaliana (Mouse-ear cress).